The following is a 31-amino-acid chain: Cyclotide mden-K (31 aa).

The segment at residues 1 to 31 is a cross-link (cyclopeptide (Gly-Asn)); sequence GSIPCGESCVWIPCISSVVGCACKNKVCYKN. 3 disulfide bridges follow: Cys-5–Cys-21, Cys-9–Cys-23, and Cys-14–Cys-28.

It belongs to the cyclotide family. Bracelet subfamily. Post-translationally, this is a cyclic peptide.

In terms of biological role, probably participates in a plant defense mechanism. The polypeptide is Cyclotide mden-K (Melicytus dentatus (Tree violet)).